We begin with the raw amino-acid sequence, 277 residues long: Thymidylate synthase (277 aa).

R21 contacts dUMP. H51 serves as a coordination point for (6R)-5,10-methylene-5,6,7,8-tetrahydrofolate. 139 to 140 is a binding site for dUMP; the sequence is RR. C159 serves as the catalytic Nucleophile. DUMP-binding positions include 179–182, N190, and 220–222; these read RSAD and HIY. Residue D182 participates in (6R)-5,10-methylene-5,6,7,8-tetrahydrofolate binding. Position 276 (A276) interacts with (6R)-5,10-methylene-5,6,7,8-tetrahydrofolate.

This sequence belongs to the thymidylate synthase family. Bacterial-type ThyA subfamily. In terms of assembly, homodimer.

The protein resides in the cytoplasm. It catalyses the reaction dUMP + (6R)-5,10-methylene-5,6,7,8-tetrahydrofolate = 7,8-dihydrofolate + dTMP. It functions in the pathway pyrimidine metabolism; dTTP biosynthesis. In terms of biological role, catalyzes the reductive methylation of 2'-deoxyuridine-5'-monophosphate (dUMP) to 2'-deoxythymidine-5'-monophosphate (dTMP) while utilizing 5,10-methylenetetrahydrofolate (mTHF) as the methyl donor and reductant in the reaction, yielding dihydrofolate (DHF) as a by-product. This enzymatic reaction provides an intracellular de novo source of dTMP, an essential precursor for DNA biosynthesis. This chain is Thymidylate synthase, found in Roseobacter denitrificans (strain ATCC 33942 / OCh 114) (Erythrobacter sp. (strain OCh 114)).